We begin with the raw amino-acid sequence, 404 residues long: SL1278 acyltransferase Chp1 (404 aa).

The Periplasmic segment spans residues 1–42 (MKCPGVSDCVATVRHDNVFAIAAGLRWSAAVPPLHKGDAVTK). A helical membrane pass occupies residues 43 to 63 (LLVGAIAGGMLACAAILGDGI). Residues 64-404 (ASADTALIVP…RGLLPKGKKH (341 aa)) are Cytoplasmic-facing. A PE-PPE domain is found at 104-325 (PTATRHVVSY…LRPIIDRAYQ (222 aa)).

It belongs to the mycobacterial PPE family.

It localises to the cell inner membrane. The catalysed reaction is 3 3'-(hydroxy)phthioceranyl-2'-palmitoyl(stearoyl)-2-O-sulfo-alpha,alpha-trehalose = 3,6,6'-tris-(hydroxy)phthioceranyl-2-palmitoyl(stearoyl)-2'-sulfo-alpha-alpha-trehalose + 2 2'-palmitoyl/stearoyl-2-O-sulfo-alpha,alpha-trehalose.. Activity is potentiated by the SL-1 transporter MmpL8. Inhibited by the lipase inhibitor tetrahydrolipstatin (THL). Involved in the final steps of the cell wall sulfolipid-1 (SL-1) biosynthesis. Catalyzes two successive acylations of the precursor 2-palmitoyl-3-(C43)-phthioceranyl-alpha, alpha'-D-trehalose-2'-sulfate (SL1278) to yield the tetraacylated sulfolipid SL-1. This is SL1278 acyltransferase Chp1 from Mycobacterium tuberculosis (strain ATCC 25618 / H37Rv).